The chain runs to 269 residues: Putative pyridoxine kinase (269 aa).

Position 139 (asparagine 139) interacts with ATP. Glutamate 142 contacts Mg(2+). Residues 176-180 (KGGGR), aspartate 189, valine 205, glycine 214, and lysine 239 each bind ATP.

The protein belongs to the ThiD family.

It carries out the reaction pyridoxal + ATP = pyridoxal 5'-phosphate + ADP + H(+). Its function is as follows. Phosphorylates B6 vitamers; functions in a salvage pathway. Uses pyridoxal, pyridoxine, and pyridoxamine as substrates. The sequence is that of Putative pyridoxine kinase (pdxK) from Treponema pallidum (strain Nichols).